The primary structure comprises 189 residues: Ion-translocating oxidoreductase complex subunit B (189 aa).

Positions 1-26 (MSGIFIAIILLTILALLFGILLGFAA) are hydrophobic. The 4Fe-4S domain occupies 32–90 (EGDPLVDQLEALLPQTQCGQCGYPGCRPYAEAIANGEKINLCPPGGSATMEKLAEMAGV). Residues cysteine 49, cysteine 52, cysteine 57, cysteine 73, cysteine 114, cysteine 117, cysteine 120, cysteine 124, cysteine 144, cysteine 147, cysteine 150, and cysteine 154 each coordinate [4Fe-4S] cluster. 2 4Fe-4S ferredoxin-type domains span residues 105 to 134 (KVAY…GSGK) and 135 to 164 (LMHT…MLPV).

Belongs to the 4Fe4S bacterial-type ferredoxin family. RnfB subfamily. In terms of assembly, the complex is composed of six subunits: RnfA, RnfB, RnfC, RnfD, RnfE and RnfG. The cofactor is [4Fe-4S] cluster.

It localises to the cell inner membrane. Part of a membrane-bound complex that couples electron transfer with translocation of ions across the membrane. The chain is Ion-translocating oxidoreductase complex subunit B from Shewanella sediminis (strain HAW-EB3).